We begin with the raw amino-acid sequence, 680 residues long: MLCLGLSGGLSKIHENSLDLPNTFMHDGAAVLVRDGQVIAAVEEERLNRIKHSNKLPRRSIQYCLEYAGVQLSDIDCIAYYATEAFCNAMLERLLVSQSHMSIPLDAKLLLRGLLAQEFGTEVDPSRISFVSHHLSHAWSAFSMSGFEQSLILTIDGGGDFASGLLAVGSGTEVKPLATFPESDSLGLLYLETIKYLGYGMFDEYKVMGLAPYGDPAPHRDLFEQFYELLDNGGYRIYLDRIGPTLLRSIEVRRKGMPFTQQHKDLSASLQEALERIVFHVLRHHSEITGIKRLSLAGGVAHNCTLNGKLLRSGIFQDIFVQPAAHDAGCALGAALMMSNELGQSAPRERLQEVYWGPDLGSDRAVEQELIAWGGHIEIERCDDVASRAAEWIADGAVIGWVQGRSEFGPRALGNRSILADPRPATNKDRINAIVKKREGYRPFAPSVLEEDANEFFELPDSRQEFPFMNFVVPVRESKRNLLGAVTHVDGTARLQTVSRNINQAYWEVINAFRKRTGVPILLNTSFNNNVEPIVDSVADAVTTFLTTDLDGLVVGSYLIKKRTASPEDWSRLALSLPPYSSLHQVRAFTALDRQETVCEIRTGPSSREAVRISSELFELLMRIDGEAPLGDILDLIAPNQNQREALLNELRGLWEQRSVRLHPMRADSAAEPLSSPINL.

Belongs to the NodU/CmcH family.

It localises to the cytoplasm. Functionally, involved in the O-carbamoylation of nod factors. The chain is Nodulation protein NolNO (nolO) from Sinorhizobium fredii (strain NBRC 101917 / NGR234).